The chain runs to 613 residues: MCLLSMRFTVAILLVLLSHCGGSHATSCTPGQPFPVPSYPESSLQETFEHIFETASGYFENESFQATNVAIEVTSSRETLWSFYHAAKNQSSQDGSTVIGKDTVFRVARVSKLLTAIAVLQLHDQGHVSSLYDPINDYIPDLEPSSVQWDRVTIWDLLNNVAGILDMCSYTLFDKRLNTNSDFTIDGYADIYMDFSARQKADLNLPPVSDAILEVMPACQVDKSIPCDSAGLLSWLRSSKAVFNPHQVNSNSNVGFSLLGILIERISGVKYEQFIHQTIIEPLQLNSTSFRPPHKDSGAVLQNDHTWSWDVGVNNPSVGLYSTPCDISTLLRWTLNKSPSSILNWFAPGFYAVGSHSLIGMPWNIFRTTTPLSIPNRPTTFNTVVGTLGPYTSVVVVMPEYDLAVSLMMNGALGHPHDILTNVTFPLIRAADKIALESVQDNYAGTYKAEPGQKINSSITLSVSSDHGLRISELISNGSSILPVMERLASSKSGGGANWIFQAVPTFLDSKHQGRRGDGVIVDEEWRWTYVLDKPPGEGWNDWCLSSFDPVTYAGEPLTKMVFHKDAKSGRVLSVALSGYNITLTKAVQEADSFAQGDALDLLAHAGQEVLAE.

A signal peptide spans 1 to 25 (MCLLSMRFTVAILLVLLSHCGGSHA). N61, N89, N286, N422, N456, N477, and N581 each carry an N-linked (GlcNAc...) asparagine glycan.

Belongs to the beta-lactamase family.

It functions in the pathway secondary metabolite biosynthesis. In terms of biological role, probable hydrolase; part of the gene cluster that mediates the biosynthesis of squalestatin S1 (SQS1, also known as zaragozic acid A), a heavily oxidized fungal polyketide that offers potent cholesterol lowering activity by targeting squalene synthase (SS). SQS1 is composed of a 2,8-dioxobicyclic[3.2.1]octane-3,4,5-tricarboxyclic acid core that is connected to two lipophilic polyketide arms. These initial steps feature the priming of an unusual benzoic acid starter unit onto the highly reducing polyketide synthase clz14, followed by oxaloacetate extension and product release to generate a tricarboxylic acid containing product. The phenylalanine ammonia lyase (PAL) clz10 and the acyl-CoA ligase clz12 are involved in transforming phenylalanine into benzoyl-CoA. The citrate synthase-like protein clz17 is involved in connecting the C-alpha-carbons of the hexaketide chain and oxaloacetate to afford the tricarboxylic acid unit. The potential hydrolytic enzymes, clz11 and clz13, are in close proximity to pks2 and may participate in product release. On the other side, the tetraketide arm is synthesized by a the squalestatin tetraketide synthase clz2 and enzymatically esterified to the core in the last biosynthetic step, by the acetyltransferase clz6. The biosynthesis of the tetraketide must involve 3 rounds of chain extension. After the first and second rounds methyl-transfer occurs, and in all rounds of extension the ketoreductase and dehydratase are active. The enoyl reductase and C-MeT of clz2 are not active in the final round of extension. The acetyltransferase clz6 appears to have a broad substrate selectivity for its acyl CoA substrate, allowing the in vitro synthesis of novel squalestatins. The biosynthesis of SQS1 requires several oxidative steps likely performed by oxidoreductases clz3, clz15 and clz16. Finally, in support of the identification of the cluster as being responsible for SQS1 production, the cluster contains a gene encoding a putative squalene synthase (SS) clz20, suggesting a likely mechanism for self-resistance. The chain is Probable hydrolase clz13 from Cochliobolus lunatus (Filamentous fungus).